The sequence spans 250 residues: 2,3-bisphosphoglycerate-dependent phosphoglycerate mutase (250 aa).

Residues 10–17 (RHGESQWN), 23–24 (TG), Arg-62, 89–92 (ERHY), Lys-100, 116–117 (RR), and 185–186 (GN) contribute to the substrate site. His-11 acts as the Tele-phosphohistidine intermediate in catalysis. The active-site Proton donor/acceptor is the Glu-89.

This sequence belongs to the phosphoglycerate mutase family. BPG-dependent PGAM subfamily. As to quaternary structure, homodimer.

It catalyses the reaction (2R)-2-phosphoglycerate = (2R)-3-phosphoglycerate. It functions in the pathway carbohydrate degradation; glycolysis; pyruvate from D-glyceraldehyde 3-phosphate: step 3/5. Functionally, catalyzes the interconversion of 2-phosphoglycerate and 3-phosphoglycerate. The protein is 2,3-bisphosphoglycerate-dependent phosphoglycerate mutase of Yersinia pseudotuberculosis serotype IB (strain PB1/+).